A 122-amino-acid chain; its full sequence is MARIAGINIPDHKHAVIALTAIYGIGKTRSQAICAAAGIAEDVKIRELSEEQIDKLRDEVGKFTVEGDLRREVTLNIKRLLDLGCYRGLRHRRSLPVRGQRTKTNARTRKVHVSRSKNSRGK.

A disordered region spans residues 94–122; it reads SLPVRGQRTKTNARTRKVHVSRSKNSRGK.

Belongs to the universal ribosomal protein uS13 family. As to quaternary structure, part of the 30S ribosomal subunit. Forms a loose heterodimer with protein S19. Forms two bridges to the 50S subunit in the 70S ribosome.

Its function is as follows. Located at the top of the head of the 30S subunit, it contacts several helices of the 16S rRNA. In the 70S ribosome it contacts the 23S rRNA (bridge B1a) and protein L5 of the 50S subunit (bridge B1b), connecting the 2 subunits; these bridges are implicated in subunit movement. Contacts the tRNAs in the A and P-sites. The protein is Small ribosomal subunit protein uS13 of Haemophilus influenzae (strain ATCC 51907 / DSM 11121 / KW20 / Rd).